The sequence spans 108 residues: Nucleoid-associated protein HEAR1046 (108 aa).

A disordered region spans residues 86 to 108 (TSQEKMAGATAGMPMPPGFKMPF). Positions 99–108 (PMPPGFKMPF) are enriched in pro residues.

The protein belongs to the YbaB/EbfC family. As to quaternary structure, homodimer.

It localises to the cytoplasm. Its subcellular location is the nucleoid. Functionally, binds to DNA and alters its conformation. May be involved in regulation of gene expression, nucleoid organization and DNA protection. This chain is Nucleoid-associated protein HEAR1046, found in Herminiimonas arsenicoxydans.